The sequence spans 773 residues: ATP-dependent RNA helicase MAK5 (773 aa).

The span at 73-82 (KDSNKEKVGD) shows a compositional bias: basic and acidic residues. Disordered stretches follow at residues 73-99 (KDSN…ESEL) and 114-144 (SAAS…VDED). The segment covering 83 to 99 (DQESVENESGSDSESEL) has biased composition (acidic residues). Thr-135 carries the post-translational modification Phosphothreonine. At Ser-138 the chain carries Phosphoserine. The Q motif motif lies at 171–199 (EWTNLAPLSMTILQSLQNLNFLRPTEIQK). One can recognise a Helicase ATP-binding domain in the interval 202–399 (IPVIMQGVDV…SSSRQVKDRR (198 aa)). 215–222 (ASTGSGKT) lines the ATP pocket. A DEAD box motif is present at residues 333-336 (DEAD). Positions 452 to 615 (DLYCYYFLTM…STDLNSRSTN (164 aa)) constitute a Helicase C-terminal domain. A Phosphoserine modification is found at Ser-678.

Belongs to the DEAD box helicase family. DDX24/MAK5 subfamily.

Its subcellular location is the nucleus. It localises to the nucleolus. The enzyme catalyses ATP + H2O = ADP + phosphate + H(+). Functionally, ATP-binding RNA helicase involved in the biogenesis of 60S ribosomal subunits and is required for the normal formation of 25S and 5.8S rRNAs. Required for the maintenance of dsRNA killer plasmid. This is ATP-dependent RNA helicase MAK5 (MAK5) from Saccharomyces cerevisiae (strain ATCC 204508 / S288c) (Baker's yeast).